Here is a 584-residue protein sequence, read N- to C-terminus: Arginine--tRNA ligase (584 aa).

The 'HIGH' region motif lies at 129 to 139 (ANPTGPLHVGH).

It belongs to the class-I aminoacyl-tRNA synthetase family. Monomer.

The protein resides in the cytoplasm. The catalysed reaction is tRNA(Arg) + L-arginine + ATP = L-arginyl-tRNA(Arg) + AMP + diphosphate. The protein is Arginine--tRNA ligase of Halorhodospira halophila (strain DSM 244 / SL1) (Ectothiorhodospira halophila (strain DSM 244 / SL1)).